Reading from the N-terminus, the 651-residue chain is ATP-dependent RNA helicase MRH4, mitochondrial (651 aa).

The N-terminal 61 residues, 1–61, are a transit peptide targeting the mitochondrion; the sequence is MLRSSLGSVC…SNARQATRRE (61 aa). Positions 45-56 are enriched in polar residues; that stretch reads SSLSFSTSNARQ. Positions 45 to 137 are disordered; sequence SSLSFSTSNA…GGKKLGRDGK (93 aa). 2 stretches are compositionally biased toward basic and acidic residues: residues 72–83 and 124–137; these read RVGRSTARDGDK and NGREGGKKLGRDGK. The Q motif signature appears at 167–200; sequence DSFDQFDLLPQVKDAVLNEALKGMLDIKPTPVQR. Residues 210–241 are disordered; sequence TTGARSRWRTKSKPADSGSEAASPDAPPPPRE. Residues 224–233 are compositionally biased toward low complexity; sequence ADSGSEAASP. One can recognise a Helicase ATP-binding domain in the interval 234–445; that stretch reads DAPPPPREEF…ASRFPNMRRI (212 aa). 247–254 is a binding site for ATP; it reads AETGSGKT. A DEAD box motif is present at residues 392 to 395; it reads DEAD. Residues 494–651 enclose the Helicase C-terminal domain; the sequence is PVKGQVDVRR…ESMFMGQALV (158 aa).

Belongs to the DEAD box helicase family. MRH4 subfamily.

It localises to the mitochondrion. The catalysed reaction is ATP + H2O = ADP + phosphate + H(+). In terms of biological role, ATP-binding RNA helicase involved in mitochondrial RNA metabolism. Required for maintenance of mitochondrial DNA. In Pyricularia oryzae (strain 70-15 / ATCC MYA-4617 / FGSC 8958) (Rice blast fungus), this protein is ATP-dependent RNA helicase MRH4, mitochondrial (MRH4).